The primary structure comprises 142 residues: Small ribosomal subunit protein uS12 (142 aa).

It belongs to the universal ribosomal protein uS12 family. As to quaternary structure, part of the 30S ribosomal subunit.

In terms of biological role, with S4 and S5 plays an important role in translational accuracy. Located at the interface of the 30S and 50S subunits. The polypeptide is Small ribosomal subunit protein uS12 (Archaeoglobus fulgidus (strain ATCC 49558 / DSM 4304 / JCM 9628 / NBRC 100126 / VC-16)).